The chain runs to 443 residues: Chromosomal replication initiator protein DnaA (443 aa).

The segment at 1–73 (MYGDHRQIWE…YDAASKATNK (73 aa)) is domain I, interacts with DnaA modulators. A domain II region spans residues 73 to 106 (KLYEIKILSEDEEEYREIKESIEKENLTESTTLS). Positions 107-323 (TLNPKYTFDT…GALIRIVAFS (217 aa)) are domain III, AAA+ region. The ATP site is built by Gly151, Gly153, Lys154, and Thr155. The segment at 324–443 (NLTKANIDLE…EELKKRIKGY (120 aa)) is domain IV, binds dsDNA.

This sequence belongs to the DnaA family. As to quaternary structure, oligomerizes as a right-handed, spiral filament on DNA at oriC.

The protein resides in the cytoplasm. In terms of biological role, plays an essential role in the initiation and regulation of chromosomal replication. ATP-DnaA binds to the origin of replication (oriC) to initiate formation of the DNA replication initiation complex once per cell cycle. Binds the DnaA box (a 9 base pair repeat at the origin) and separates the double-stranded (ds)DNA. Forms a right-handed helical filament on oriC DNA; dsDNA binds to the exterior of the filament while single-stranded (ss)DNA is stabiized in the filament's interior. The ATP-DnaA-oriC complex binds and stabilizes one strand of the AT-rich DNA unwinding element (DUE), permitting loading of DNA polymerase. After initiation quickly degrades to an ADP-DnaA complex that is not apt for DNA replication. Binds acidic phospholipids. The protein is Chromosomal replication initiator protein DnaA of Thermoanaerobacter pseudethanolicus (strain ATCC 33223 / 39E) (Clostridium thermohydrosulfuricum).